The primary structure comprises 253 residues: 5'/3'-nucleotidase SurE (253 aa).

A divalent metal cation is bound by residues D8, D9, S39, and N92.

Belongs to the SurE nucleotidase family. It depends on a divalent metal cation as a cofactor.

It localises to the cytoplasm. The enzyme catalyses a ribonucleoside 5'-phosphate + H2O = a ribonucleoside + phosphate. It catalyses the reaction a ribonucleoside 3'-phosphate + H2O = a ribonucleoside + phosphate. The catalysed reaction is [phosphate](n) + H2O = [phosphate](n-1) + phosphate + H(+). Nucleotidase with a broad substrate specificity as it can dephosphorylate various ribo- and deoxyribonucleoside 5'-monophosphates and ribonucleoside 3'-monophosphates with highest affinity to 3'-AMP. Also hydrolyzes polyphosphate (exopolyphosphatase activity) with the preference for short-chain-length substrates (P20-25). Might be involved in the regulation of dNTP and NTP pools, and in the turnover of 3'-mononucleotides produced by numerous intracellular RNases (T1, T2, and F) during the degradation of various RNAs. The chain is 5'/3'-nucleotidase SurE from Escherichia fergusonii (strain ATCC 35469 / DSM 13698 / CCUG 18766 / IAM 14443 / JCM 21226 / LMG 7866 / NBRC 102419 / NCTC 12128 / CDC 0568-73).